The sequence spans 195 residues: MTPTLLSAFWTYTLITAMTPGPNNILALSSATSHGFRQSTRVLAGMSLGFLIVMLLCAGISFSLAVIDPAAVHLLSWAGAAYIVWLAWKIATSPTKEDGLQTKPISFWASFALQFVNVKIILYGVTALSTFVLPQTQALSWVVGVSVLLAMIGTFGNVCWALAGHLFQRLFRQYGRQLNIVLALLLVYCAVRIFY.

The Periplasmic segment spans residues 1–7 (MTPTLLS). A helical transmembrane segment spans residues 8-28 (AFWTYTLITAMTPGPNNILAL). The Cytoplasmic portion of the chain corresponds to 29–46 (SSATSHGFRQSTRVLAGM). A helical transmembrane segment spans residues 47-67 (SLGFLIVMLLCAGISFSLAVI). Topologically, residues 68-69 (DP) are periplasmic. Residues 70–90 (AAVHLLSWAGAAYIVWLAWKI) traverse the membrane as a helical segment. Over 91-104 (ATSPTKEDGLQTKP) the chain is Cytoplasmic. The helical transmembrane segment at 105 to 125 (ISFWASFALQFVNVKIILYGV) threads the bilayer. Topologically, residues 126-141 (TALSTFVLPQTQALSW) are periplasmic. A helical membrane pass occupies residues 142–162 (VVGVSVLLAMIGTFGNVCWAL). At 163–176 (AGHLFQRLFRQYGR) the chain is on the cytoplasmic side. A helical transmembrane segment spans residues 177–194 (QLNIVLALLLVYCAVRIF). Position 195 (tyrosine 195) is a topological domain, periplasmic.

The protein belongs to the Rht family.

The protein localises to the cell inner membrane. The catalysed reaction is O-acetyl-L-serine(in) = O-acetyl-L-serine(out). It catalyses the reaction L-cysteine(in) = L-cysteine(out). Functionally, exporter of O-acetylserine (OAS) and cysteine. In Escherichia coli O1:K1 / APEC, this protein is Cysteine/O-acetylserine efflux protein (eamB).